The following is a 215-amino-acid chain: Large ribosomal subunit protein uL3 (215 aa).

The tract at residues 136–161 (GVSISHRSHGSTGQRQDPGKVFKGKK) is disordered. Glutamine 151 carries the N5-methylglutamine modification.

Belongs to the universal ribosomal protein uL3 family. Part of the 50S ribosomal subunit. Forms a cluster with proteins L14 and L19. In terms of processing, methylated by PrmB.

Its function is as follows. One of the primary rRNA binding proteins, it binds directly near the 3'-end of the 23S rRNA, where it nucleates assembly of the 50S subunit. The sequence is that of Large ribosomal subunit protein uL3 from Rickettsia akari (strain Hartford).